The chain runs to 354 residues: Serum paraoxonase/lactonase 3 (354 aa).

A disulfide bridge connects residues Cys42 and Cys352. N-linked (GlcNAc...) asparagine glycosylation occurs at Asn50. Glu53 and Asp54 together coordinate Ca(2+). The active-site Proton acceptor is His114. Ile116 is a Ca(2+) binding site. Residue Ser165 is modified to Phosphoserine. Positions 167, 168, 223, 268, and 269 each coordinate Ca(2+). Asn269 and Asn323 each carry an N-linked (GlcNAc...) asparagine glycan.

It belongs to the paraoxonase family. Homodimer. It depends on Ca(2+) as a cofactor. In terms of processing, glycosylated. Post-translationally, the signal sequence is not cleaved.

It localises to the secreted. The protein localises to the extracellular space. It catalyses the reaction a phenyl acetate + H2O = a phenol + acetate + H(+). It carries out the reaction An aryl dialkyl phosphate + H2O = dialkyl phosphate + an aryl alcohol.. The enzyme catalyses an N-acyl-L-homoserine lactone + H2O = an N-acyl-L-homoserine + H(+). In terms of biological role, has low activity towards the organophosphate paraxon and aromatic carboxylic acid esters. Rapidly hydrolyzes lactones such as statin prodrugs (e.g. lovastatin). Hydrolyzes aromatic lactones and 5- or 6-member ring lactones with aliphatic substituents but not simple lactones or those with polar substituents. This is Serum paraoxonase/lactonase 3 (Pon3) from Rattus norvegicus (Rat).